The following is a 141-amino-acid chain: Nucleoside diphosphate kinase (141 aa).

6 residues coordinate ATP: Lys-9, Phe-57, Arg-85, Thr-91, Arg-102, and Asn-112. Residue His-115 is the Pros-phosphohistidine intermediate of the active site.

The protein belongs to the NDK family. In terms of assembly, homotetramer. Mg(2+) is required as a cofactor.

It localises to the cytoplasm. It carries out the reaction a 2'-deoxyribonucleoside 5'-diphosphate + ATP = a 2'-deoxyribonucleoside 5'-triphosphate + ADP. The catalysed reaction is a ribonucleoside 5'-diphosphate + ATP = a ribonucleoside 5'-triphosphate + ADP. Major role in the synthesis of nucleoside triphosphates other than ATP. The ATP gamma phosphate is transferred to the NDP beta phosphate via a ping-pong mechanism, using a phosphorylated active-site intermediate. The protein is Nucleoside diphosphate kinase of Chlamydia abortus (strain DSM 27085 / S26/3) (Chlamydophila abortus).